Consider the following 305-residue polypeptide: Olfactory receptor 9G9 (305 aa).

At 1-27 (MQRSNHTVTEFILLGFTTDPGMQLGLF) the chain is on the extracellular side. Residue asparagine 5 is glycosylated (N-linked (GlcNAc...) asparagine). A helical membrane pass occupies residues 28–48 (VVFLGVYSLTVVGNSTLIVLI). Topologically, residues 49–64 (CNDSHLHTPMYFVVGN) are cytoplasmic. A helical membrane pass occupies residues 65 to 85 (LSFLDLWYSSVYTPKILVICI). At 86 to 96 (SEDKSISFAGC) the chain is on the extracellular side. Cysteine 96 and cysteine 178 are oxidised to a cystine. The helical transmembrane segment at 97–117 (LCQFFFSAGLAYSECCLLAAM) threads the bilayer. Over 118 to 138 (AYDRYVAISKPLLYAQAMSIK) the chain is Cytoplasmic. The helical transmembrane segment at 139-159 (LCALLVAVSYCGGFINSSIIT) threads the bilayer. Residues 160 to 200 (KKTFSFNFCCENIIDDFFCDLLPLVKLACGEKGCYKFLMYF) lie on the Extracellular side of the membrane. Residues 201–221 (LLASNVICPAVLILASYLFII) form a helical membrane-spanning segment. The Cytoplasmic portion of the chain corresponds to 222–239 (TSVLRISSSQGRLKAFST). Residues 240-260 (CSSHLTSVTLYYGSILYIYAL) form a helical membrane-spanning segment. Topologically, residues 261–271 (PRSSYSFDMDK) are extracellular. The chain crosses the membrane as a helical span at residues 272–291 (IVSTFYTEVLPMLNPMIYSL). Topologically, residues 292–305 (RNKDVKEALKKLLP) are cytoplasmic.

Belongs to the G-protein coupled receptor 1 family.

The protein resides in the cell membrane. In terms of biological role, odorant receptor. In Homo sapiens (Human), this protein is Olfactory receptor 9G9 (OR9G9).